The primary structure comprises 239 residues: Phosphothreonine lyase OspF (239 aa).

Catalysis depends on H104, which acts as the Proton donor. Catalysis depends on K134, which acts as the Proton acceptor.

The protein belongs to the phosphothreonine lyase family.

The protein localises to the secreted. Functionally, catalyzes the removal of the phosphate group from the phosphothreonine in the mitogen-activated protein kinases such as MAPK2/ERK2, MAPK3/ERK1, MAPK8 and MAPK14 in an irreversible reaction, thus preventing the downstream phosphorylation of histone H3. This epigenetic modification results in inhibition of the transcription of a specific subset of pro-inflammatory genes, and ultimately to a reduced immune response against the invading pathogen. The diminished immune response enhances the bacterium's ability to disseminate and multiply within the host. The sequence is that of Phosphothreonine lyase OspF (ospF) from Shigella dysenteriae serotype 1 (strain Sd197).